Here is a 538-residue protein sequence, read N- to C-terminus: Nicotinate phosphoribosyltransferase (538 aa).

Nicotinate is bound by residues Tyr21 and Thr210. His213 bears the Phosphohistidine mark. A nicotinate-binding site is contributed by Arg318. A 5-phospho-alpha-D-ribose 1-diphosphate-binding site is contributed by Thr380.

Belongs to the NAPRTase family. In terms of assembly, homodimer. The cofactor is Mg(2+). It depends on Mn(2+) as a cofactor. Post-translationally, transiently phosphorylated on a His residue during the reaction cycle. Phosphorylation strongly increases the affinity for substrates and increases the rate of nicotinate D-ribonucleotide production. Dephosphorylation regenerates the low-affinity form of the enzyme, leading to product release.

It is found in the cytoplasm. Its subcellular location is the cytosol. It catalyses the reaction nicotinate + 5-phospho-alpha-D-ribose 1-diphosphate + ATP + H2O = nicotinate beta-D-ribonucleotide + ADP + phosphate + diphosphate. It participates in cofactor biosynthesis; NAD(+) biosynthesis; nicotinate D-ribonucleotide from nicotinate: step 1/1. In terms of biological role, catalyzes the first step in the biosynthesis of NAD from nicotinic acid, the ATP-dependent synthesis of beta-nicotinate D-ribonucleotide from nicotinate and 5-phospho-D-ribose 1-phosphate. Helps prevent cellular oxidative stress via its role in NAD biosynthesis. The polypeptide is Nicotinate phosphoribosyltransferase (Naprt) (Rattus norvegicus (Rat)).